A 182-amino-acid chain; its full sequence is IQ domain-containing protein F1 (182 aa).

Basic and acidic residues-rich tracts occupy residues 1–10 (MGEEQQKPEE) and 31–43 (ETEK…KQEL). Positions 1–43 (MGEEQQKPEELNAPTDDAPQEKQQPADLSSETEKAKSKKKQEL) are disordered. IQ domains are found at residues 45–74 (EKDQ…SAWI) and 101–130 (EQWA…AVRT).

In terms of assembly, interacts with calmodulin. As to expression, specifically expressed in testes and mature spermatozoa (at protein level).

It is found in the cytoplasmic vesicle. Its subcellular location is the secretory vesicle. The protein localises to the acrosome. Its function is as follows. Involved in sperm capacitation and acrosome reaction. This chain is IQ domain-containing protein F1, found in Mus musculus (Mouse).